We begin with the raw amino-acid sequence, 244 residues long: Coenzyme Q-binding protein COQ10 homolog B, mitochondrial (244 aa).

The protein belongs to the COQ10 family. Interacts with coenzyme Q.

It is found in the mitochondrion inner membrane. In terms of biological role, required for the function of coenzyme Q in the respiratory chain. May serve as a chaperone or may be involved in the transport of Q6 from its site of synthesis to the catalytic sites of the respiratory complexes. The sequence is that of Coenzyme Q-binding protein COQ10 homolog B, mitochondrial (coq10b) from Xenopus laevis (African clawed frog).